The sequence spans 279 residues: Pantothenate synthetase (279 aa).

An ATP-binding site is contributed by 26 to 33 (MGGLHEGH). H33 serves as the catalytic Proton donor. Residue Q57 participates in (R)-pantoate binding. Position 57 (Q57) interacts with beta-alanine. 143–146 (GKKD) contacts ATP. Q149 is a (R)-pantoate binding site. Residues V172 and 180-183 (LSSR) contribute to the ATP site.

Belongs to the pantothenate synthetase family. As to quaternary structure, homodimer.

It is found in the cytoplasm. The catalysed reaction is (R)-pantoate + beta-alanine + ATP = (R)-pantothenate + AMP + diphosphate + H(+). The protein operates within cofactor biosynthesis; (R)-pantothenate biosynthesis; (R)-pantothenate from (R)-pantoate and beta-alanine: step 1/1. In terms of biological role, catalyzes the condensation of pantoate with beta-alanine in an ATP-dependent reaction via a pantoyl-adenylate intermediate. This is Pantothenate synthetase from Nitrosospira multiformis (strain ATCC 25196 / NCIMB 11849 / C 71).